A 47-amino-acid chain; its full sequence is Photosystem II reaction center protein K (47 aa).

The propeptide occupies 1–10 (MAVYTLDLLA). A helical transmembrane segment spans residues 19–39 (FGPLIDILPIIPLFFLLLAFV).

Belongs to the PsbK family. PSII is composed of 1 copy each of membrane proteins PsbA, PsbB, PsbC, PsbD, PsbE, PsbF, PsbH, PsbI, PsbJ, PsbK, PsbL, PsbM, PsbT, PsbX, PsbY, PsbZ, Psb30/Ycf12, peripheral proteins PsbO, CyanoQ (PsbQ), PsbU, PsbV and a large number of cofactors. It forms dimeric complexes.

The protein localises to the cellular thylakoid membrane. One of the components of the core complex of photosystem II (PSII). PSII is a light-driven water:plastoquinone oxidoreductase that uses light energy to abstract electrons from H(2)O, generating O(2) and a proton gradient subsequently used for ATP formation. It consists of a core antenna complex that captures photons, and an electron transfer chain that converts photonic excitation into a charge separation. The protein is Photosystem II reaction center protein K of Synechococcus sp. (strain CC9311).